The chain runs to 1426 residues: DNA-directed RNA polymerase subunit beta' (1426 aa).

The Zn(2+) site is built by Cys-71, Cys-73, Cys-86, and Cys-89. Mg(2+) is bound by residues Asp-461, Asp-463, and Asp-465. Zn(2+) contacts are provided by Cys-814, Cys-888, Cys-895, and Cys-898. Residues 1392-1426 (ADPIAAAESAIGLGGGEQPATSETGAGGSDPSEEG) form a disordered region.

The protein belongs to the RNA polymerase beta' chain family. In terms of assembly, the RNAP catalytic core consists of 2 alpha, 1 beta, 1 beta' and 1 omega subunit. When a sigma factor is associated with the core the holoenzyme is formed, which can initiate transcription. Mg(2+) is required as a cofactor. It depends on Zn(2+) as a cofactor.

It catalyses the reaction RNA(n) + a ribonucleoside 5'-triphosphate = RNA(n+1) + diphosphate. Its function is as follows. DNA-dependent RNA polymerase catalyzes the transcription of DNA into RNA using the four ribonucleoside triphosphates as substrates. The chain is DNA-directed RNA polymerase subunit beta' from Alkalilimnicola ehrlichii (strain ATCC BAA-1101 / DSM 17681 / MLHE-1).